Consider the following 419-residue polypeptide: G protein-activated inward rectifier potassium channel 4 (419 aa).

At 1–86 (MAGDSRNAMN…LFTTLVDLKW (86 aa)) the chain is on the cytoplasmic side. At Ser5 the chain carries Phosphoserine. A helical transmembrane segment spans residues 87–111 (RFNLLVFTMVYTITWLFFGFIWWLI). The Extracellular segment spans residues 112–135 (AYVRGDLDHVGDQEWIPCVENLSG). The helical; Pore-forming intramembrane region spans 136–147 (FVSAFLFSIETE). The pore-forming intramembrane region spans 148 to 154 (TTIGYGF). The Selectivity filter signature appears at 149 to 154 (TIGYGF). At 155–163 (RVITEKCPE) the chain is on the extracellular side. The helical transmembrane segment at 164-185 (GIILLLVQAILGSIVNAFMVGC) threads the bilayer. Residues 186–419 (MFVKISQPKK…SVSQATRGSM (234 aa)) lie on the Cytoplasmic side of the membrane. The disordered stretch occupies residues 388 to 419 (GCAEAGNEAEAEKDEEGEPNGLSVSQATRGSM). Over residues 394–405 (NEAEAEKDEEGE) the composition is skewed to acidic residues. Residues 409–419 (LSVSQATRGSM) are compositionally biased toward polar residues.

Belongs to the inward rectifier-type potassium channel (TC 1.A.2.1) family. KCNJ5 subfamily. Associates with KCNJ3/GIRK1 to form a G-protein-activated heteromultimer pore-forming unit. Associates with KCNJ6/GRIK2 to form a G-protein-activated heteromultimer pore-forming unit. Expressed in the heart.

The protein localises to the membrane. The catalysed reaction is K(+)(in) = K(+)(out). Its activity is regulated as follows. Heteromultimer composed of KCNJ3/GIRK1 and KCNJ5/GIRK4 is activated by phosphatidylinositol 4,5 biphosphate (PtdIns(4,5)P2). Functionally, inward rectifier potassium channels are characterized by a greater tendency to allow potassium to flow into the cell rather than out of it. Their voltage dependence is regulated by the concentration of extracellular potassium; as external potassium is raised, the voltage range of the channel opening shifts to more positive voltages. The inward rectification is mainly due to the blockage of outward current by internal magnesium. Can be blocked by external barium. This potassium channel is controlled by G proteins. Forms a functional channel in association with KCNJ3/GIRK1. This Mus musculus (Mouse) protein is G protein-activated inward rectifier potassium channel 4 (Kcnj5).